The following is a 927-amino-acid chain: GPI inositol-deacylase (927 aa).

The Cytoplasmic segment spans residues 1 to 4; sequence MNPL. The helical transmembrane segment at 5 to 25 threads the bilayer; that stretch reads SAVFNSVVLVLLALGVTDVFF. Residues 26–595 lie on the Lumenal side of the membrane; sequence SYESSRCSMT…QIVRFHGIYL (570 aa). Residues Asn75 and Asn155 are each glycosylated (N-linked (GlcNAc...) asparagine). The active site involves Ser169. 6 N-linked (GlcNAc...) asparagine glycosylation sites follow: Asn230, Asn362, Asn397, Asn432, Asn444, and Asn482. The chain crosses the membrane as a helical span at residues 596-616; that stretch reads PVYIVANLLLAYGAQLHSILI. Residues 617 to 672 lie on the Cytoplasmic side of the membrane; the sequence is QGSCMDLDLSFDVAAKPYKVDPVLIICKYLLNYKWFKNYWDGLMLPQLDAVQLHAY. The chain crosses the membrane as a helical span at residues 673-693; the sequence is GFWFPLASLFFFIFGTSIAYW. The Lumenal portion of the chain corresponds to 694-733; sequence SSIGLQAAVRILSSLWIYLKRPSMFPKESKCITYRVYAET. A helical transmembrane segment spans residues 734–754; it reads LFFAFISWRSCGTFSLLLVFL. Residues 755–821 are Cytoplasmic-facing; that stretch reads RYLSKVLILY…KALDDCLKMH (67 aa). The chain crosses the membrane as a helical span at residues 822–842; that stretch reads FTILHLNLWIVLLGLPSFIYW. At 843–858 the chain is on the lumenal side; the sequence is LKTLRYTIQLDPDPNR. The chain crosses the membrane as a helical span at residues 859–879; sequence VSALVLIFILEILMNSTTSAI. Residues 880–887 are Cytoplasmic-facing; it reads KSSVCLKT. The helical transmembrane segment at 888–908 threads the bilayer; the sequence is AAVLQLPLSIIVVAFGTLHLY. The Lumenal portion of the chain corresponds to 909 to 927; it reads RISNLIAFSLFLHVVCCFV.

This sequence belongs to the GPI inositol-deacylase family.

Its subcellular location is the endoplasmic reticulum membrane. Its function is as follows. GPI inositol-deacylase that catalyzes the remove of the acyl chain linked to the 2-OH position of inositol ring from the GPI-anchored protein (GPI-AP) in the endoplasmic reticulum. Initiates the post-attachment remodeling phase of GPI-AP biogenesis and participates in endoplasmic reticulum (ER)-to-Golgi transport of GPI-anchored protein. The chain is GPI inositol-deacylase from Xenopus laevis (African clawed frog).